The sequence spans 122 residues: Small ribosomal subunit protein uS13 (122 aa).

The interval 94–122 (LSLPVRGQRTKTNSRTRKGKRKTVAGKKK) is disordered. The span at 101 to 122 (QRTKTNSRTRKGKRKTVAGKKK) shows a compositional bias: basic residues.

Belongs to the universal ribosomal protein uS13 family. In terms of assembly, part of the 30S ribosomal subunit. Forms a loose heterodimer with protein S19. Forms two bridges to the 50S subunit in the 70S ribosome.

Located at the top of the head of the 30S subunit, it contacts several helices of the 16S rRNA. In the 70S ribosome it contacts the 23S rRNA (bridge B1a) and protein L5 of the 50S subunit (bridge B1b), connecting the 2 subunits; these bridges are implicated in subunit movement. Contacts the tRNAs in the A and P-sites. The sequence is that of Small ribosomal subunit protein uS13 from Chlamydia muridarum (strain MoPn / Nigg).